A 239-amino-acid chain; its full sequence is Protein GrpE (239 aa).

2 disordered regions span residues 1 to 50 (MIEN…INTE) and 209 to 239 (MGHGQQNSQEEVEKDTVEEDIDSEENTSEDV). Over residues 16–30 (VLNQDNAPEDNSSAA) the composition is skewed to polar residues. Residues 218–239 (EEVEKDTVEEDIDSEENTSEDV) show a composition bias toward acidic residues.

This sequence belongs to the GrpE family. Homodimer.

Its subcellular location is the cytoplasm. Functionally, participates actively in the response to hyperosmotic and heat shock by preventing the aggregation of stress-denatured proteins, in association with DnaK and GrpE. It is the nucleotide exchange factor for DnaK and may function as a thermosensor. Unfolded proteins bind initially to DnaJ; upon interaction with the DnaJ-bound protein, DnaK hydrolyzes its bound ATP, resulting in the formation of a stable complex. GrpE releases ADP from DnaK; ATP binding to DnaK triggers the release of the substrate protein, thus completing the reaction cycle. Several rounds of ATP-dependent interactions between DnaJ, DnaK and GrpE are required for fully efficient folding. This is Protein GrpE from Prochlorococcus marinus (strain MIT 9312).